Here is a 128-residue protein sequence, read N- to C-terminus: Light-regulated protein, chloroplastic (128 aa).

2 tandem repeats follow at residues 58-72 and 111-125. Residues 58-125 form a 2 X 15 AA approximate repeats region; it reads VFPMEACDLI…ACDDLGGEFC (68 aa).

As to quaternary structure, component of high molecular weight thylakoid LFNRs-containing protein complexes containing LIR1, LFNR1, LFNR2, TIC62 and TROL proteins. Interacts directly with LFNR1 and LFNR2; LIR1 increases the affinity of LFNR1 and LFNR2 for TIC62 and subsequent thylakoid relocalization. In terms of processing, may form interchain disulfide bonds with LFNR1 and LFNR2.

It localises to the plastid. It is found in the chloroplast thylakoid membrane. The protein resides in the chloroplast envelope. Its subcellular location is the chloroplast stroma. Thylakoid-determinant subunit of high molecular weight LFNRs-containing protein complexes. The protein is Light-regulated protein, chloroplastic (LIR1) of Oryza sativa subsp. japonica (Rice).